A 180-amino-acid polypeptide reads, in one-letter code: Adenine phosphoribosyltransferase (180 aa).

A2 carries the N-acetylalanine modification. Phosphoserine occurs at positions 15 and 30. Residue Y60 is modified to Phosphotyrosine. S66 is modified (phosphoserine). T135 carries the post-translational modification Phosphothreonine.

This sequence belongs to the purine/pyrimidine phosphoribosyltransferase family. As to quaternary structure, homodimer.

The protein resides in the cytoplasm. It catalyses the reaction AMP + diphosphate = 5-phospho-alpha-D-ribose 1-diphosphate + adenine. It functions in the pathway purine metabolism; AMP biosynthesis via salvage pathway; AMP from adenine: step 1/1. Catalyzes a salvage reaction resulting in the formation of AMP, that is energically less costly than de novo synthesis. This chain is Adenine phosphoribosyltransferase, found in Bos taurus (Bovine).